We begin with the raw amino-acid sequence, 161 residues long: Large ribosomal subunit protein uL10 (161 aa).

It belongs to the universal ribosomal protein uL10 family. As to quaternary structure, part of the ribosomal stalk of the 50S ribosomal subunit. The N-terminus interacts with L11 and the large rRNA to form the base of the stalk. The C-terminus forms an elongated spine to which L12 dimers bind in a sequential fashion forming a multimeric L10(L12)X complex.

Forms part of the ribosomal stalk, playing a central role in the interaction of the ribosome with GTP-bound translation factors. This Campylobacter fetus subsp. fetus (strain 82-40) protein is Large ribosomal subunit protein uL10.